We begin with the raw amino-acid sequence, 611 residues long: Probable inactive purple acid phosphatase 27 (611 aa).

The N-terminal stretch at 1-18 is a signal peptide; that stretch reads MARNFLLVLLWFIVQVSS. N-linked (GlcNAc...) asparagine glycans are attached at residues N263 and N271. D293 contacts Fe cation. The N-linked (GlcNAc...) asparagine glycan is linked to N314. Residues D334 and Y337 each coordinate Fe cation. D334 contributes to the Zn(2+) binding site. Residues N367, H456, and H498 each coordinate Zn(2+). Residue N367 participates in substrate binding. Residue 498-500 coordinates substrate; it reads HVH. Residue H500 participates in Fe cation binding.

The protein belongs to the metallophosphoesterase superfamily. Purple acid phosphatase family. As to quaternary structure, homodimer. The cofactor is Fe cation. Zn(2+) is required as a cofactor. As to expression, expressed in roots, stems, leaves, flowers and siliques.

The protein localises to the secreted. This chain is Probable inactive purple acid phosphatase 27 (PAP27), found in Arabidopsis thaliana (Mouse-ear cress).